A 271-amino-acid chain; its full sequence is Signal recognition particle receptor subunit beta (271 aa).

A helical membrane pass occupies residues 37-57 (LLSVVVAVLAVLLTLVFWKLI). Residues 71–79 (GLCDSGKTL) and 92–95 (TQTS) contribute to the GTP site. The residue at position 112 (serine 112) is a Phosphoserine. Glycine 120 is a GTP binding site. Threonine 214 carries the phosphothreonine modification. GTP is bound at residue alanine 248.

The protein belongs to the SRP receptor beta subunit family. In terms of assembly, heterodimer with SRPRA.

The protein localises to the endoplasmic reticulum membrane. In terms of biological role, component of the signal recognition particle (SRP) complex receptor (SR). Ensures, in conjunction with the SRP complex, the correct targeting of the nascent secretory proteins to the endoplasmic reticulum membrane system. May mediate the membrane association of SR. The chain is Signal recognition particle receptor subunit beta (SRPRB) from Homo sapiens (Human).